The primary structure comprises 146 residues: Putative pre-16S rRNA nuclease (146 aa).

It belongs to the YqgF nuclease family.

It localises to the cytoplasm. In terms of biological role, could be a nuclease involved in processing of the 5'-end of pre-16S rRNA. In Paraburkholderia xenovorans (strain LB400), this protein is Putative pre-16S rRNA nuclease.